The following is a 329-amino-acid chain: Glycerol-3-phosphate dehydrogenase [NAD(P)+] (329 aa).

NADPH-binding residues include Ser13, Trp14, His34, and Lys105. The sn-glycerol 3-phosphate site is built by Lys105, Gly134, and Ser136. Residue Ala138 participates in NADPH binding. Residues Lys189, Asp242, Ser252, Arg253, and Asn254 each coordinate sn-glycerol 3-phosphate. Lys189 (proton acceptor) is an active-site residue. Arg253 is a binding site for NADPH. Val277 and Glu279 together coordinate NADPH.

This sequence belongs to the NAD-dependent glycerol-3-phosphate dehydrogenase family.

It localises to the cytoplasm. The catalysed reaction is sn-glycerol 3-phosphate + NAD(+) = dihydroxyacetone phosphate + NADH + H(+). It carries out the reaction sn-glycerol 3-phosphate + NADP(+) = dihydroxyacetone phosphate + NADPH + H(+). It participates in membrane lipid metabolism; glycerophospholipid metabolism. Catalyzes the reduction of the glycolytic intermediate dihydroxyacetone phosphate (DHAP) to sn-glycerol 3-phosphate (G3P), the key precursor for phospholipid synthesis. In Legionella pneumophila (strain Paris), this protein is Glycerol-3-phosphate dehydrogenase [NAD(P)+].